Reading from the N-terminus, the 333-residue chain is Probable tRNA pseudouridine synthase B (333 aa).

The active-site Nucleophile is Asp66. Positions 233-308 constitute a PUA domain; sequence LKKIIIKDSA…EVVEITRVIM (76 aa).

Belongs to the pseudouridine synthase TruB family. Type 2 subfamily.

It carries out the reaction uridine(55) in tRNA = pseudouridine(55) in tRNA. Functionally, could be responsible for synthesis of pseudouridine from uracil-55 in the psi GC loop of transfer RNAs. The polypeptide is Probable tRNA pseudouridine synthase B (Methanococcus maripaludis (strain DSM 14266 / JCM 13030 / NBRC 101832 / S2 / LL)).